Consider the following 334-residue polypeptide: Fructose-1,6-bisphosphatase class 1 (334 aa).

Positions 89, 112, 114, and 115 each coordinate Mg(2+). Substrate is bound by residues 115-118, N208, Y241, and K271; that span reads DGSS. E277 contacts Mg(2+).

The protein belongs to the FBPase class 1 family. In terms of assembly, homotetramer. Mg(2+) is required as a cofactor.

Its subcellular location is the cytoplasm. It catalyses the reaction beta-D-fructose 1,6-bisphosphate + H2O = beta-D-fructose 6-phosphate + phosphate. It functions in the pathway carbohydrate biosynthesis; gluconeogenesis. This is Fructose-1,6-bisphosphatase class 1 from Serratia proteamaculans (strain 568).